The sequence spans 259 residues: MILERIVTDNLPDLERRKMRLPLAKLQELVLDIPYPPIDMAMKLKGRQVRLIAEVKKASPSKGIIRSDFDPVDIAGIYARNGASAISVLTEEHHFMGSLDNLKKIRESGVASKLPLLRKDFIHDPYQVYESRLYGADAILLIVAMLSPERLQELLSLSHKLGMKCLVEVHTRSELEIALESNARIIGLNNRDLHTFKIDLTVTERLRPLIPPECIVVSESGIQTRADISRLEELGVDAVLVGEALTASVDIAAKMRELL.

It belongs to the TrpC family.

It catalyses the reaction 1-(2-carboxyphenylamino)-1-deoxy-D-ribulose 5-phosphate + H(+) = (1S,2R)-1-C-(indol-3-yl)glycerol 3-phosphate + CO2 + H2O. It participates in amino-acid biosynthesis; L-tryptophan biosynthesis; L-tryptophan from chorismate: step 4/5. The protein is Indole-3-glycerol phosphate synthase of Dehalococcoides mccartyi (strain CBDB1).